A 301-amino-acid chain; its full sequence is TLR adapter interacting with SLC15A4 on the lysosome (301 aa).

Positions 290–294 (SLHIS) match the pLxIS motif motif. A Phosphoserine modification is found at serine 294.

In terms of assembly, interacts (via pLxIS motif) with IRF5; leading to IRF5 activation. Interacts with SLC15A4; leading to its recruitment to endolysosome. In terms of processing, the phosphorylated pLxIS motif constitutes an IRF5-binding motif, leading to recruitment of the transcription factor IRF5 to induce type-I interferons and other cytokines. As to expression, highly expressed in immune cell types such as B-cells, neutrophils, dendritic cells and monocytes, the expression levels are two-three-fold higher in female cells compared to male cells (at protein level). Expressed at low levels in T-cells and NK cells.

The protein localises to the lysosome membrane. The protein resides in the endosome membrane. Its subcellular location is the nucleus. It localises to the cytoplasm. Innate immune adapter that mediates the recruitment and activation of IRF5 downstream of endolysosomal toll-like receptors TLR7, TLR8 and TLR9. Following recruitment to endolysosome by SLC15A4 downstream of TLR7, TLR8 and TLR9, specifically recruits IRF5 transcription factor via its pLxIS motif, leading to IRF5 activation and subsequent expression of type I interferons. Plays a role in the regulation of endolysosomal pH in immune cells such as B-cells, dendritic cells and monocytes. The sequence is that of TLR adapter interacting with SLC15A4 on the lysosome from Homo sapiens (Human).